The sequence spans 194 residues: Peptidyl-tRNA hydrolase (194 aa).

Tyr-17 provides a ligand contact to tRNA. His-22 serves as the catalytic Proton acceptor. The tRNA site is built by Phe-68, Asn-70, and Asn-116.

It belongs to the PTH family. In terms of assembly, monomer.

It is found in the cytoplasm. The catalysed reaction is an N-acyl-L-alpha-aminoacyl-tRNA + H2O = an N-acyl-L-amino acid + a tRNA + H(+). In terms of biological role, hydrolyzes ribosome-free peptidyl-tRNAs (with 1 or more amino acids incorporated), which drop off the ribosome during protein synthesis, or as a result of ribosome stalling. Catalyzes the release of premature peptidyl moieties from peptidyl-tRNA molecules trapped in stalled 50S ribosomal subunits, and thus maintains levels of free tRNAs and 50S ribosomes. In Histophilus somni (strain 129Pt) (Haemophilus somnus), this protein is Peptidyl-tRNA hydrolase.